The primary structure comprises 115 residues: Cytochrome c oxidase subunit 3 (115 aa).

2 helical membrane passes run 32–52 (CLQGLLFTVLLGLYFSFLQGL) and 70–90 (FFLATGFHGLHVLIGTIFLMI).

The protein belongs to the cytochrome c oxidase subunit 3 family. As to quaternary structure, component of the cytochrome c oxidase (complex IV, CIV), a multisubunit enzyme composed of a catalytic core of 3 subunits and several supernumerary subunits. The complex exists as a monomer or a dimer and forms supercomplexes (SCs) in the inner mitochondrial membrane with ubiquinol-cytochrome c oxidoreductase (cytochrome b-c1 complex, complex III, CIII).

Its subcellular location is the mitochondrion inner membrane. It catalyses the reaction 4 Fe(II)-[cytochrome c] + O2 + 8 H(+)(in) = 4 Fe(III)-[cytochrome c] + 2 H2O + 4 H(+)(out). Its function is as follows. Component of the cytochrome c oxidase, the last enzyme in the mitochondrial electron transport chain which drives oxidative phosphorylation. The respiratory chain contains 3 multisubunit complexes succinate dehydrogenase (complex II, CII), ubiquinol-cytochrome c oxidoreductase (cytochrome b-c1 complex, complex III, CIII) and cytochrome c oxidase (complex IV, CIV), that cooperate to transfer electrons derived from NADH and succinate to molecular oxygen, creating an electrochemical gradient over the inner membrane that drives transmembrane transport and the ATP synthase. Cytochrome c oxidase is the component of the respiratory chain that catalyzes the reduction of oxygen to water. Electrons originating from reduced cytochrome c in the intermembrane space (IMS) are transferred via the dinuclear copper A center (CU(A)) of subunit 2 and heme A of subunit 1 to the active site in subunit 1, a binuclear center (BNC) formed by heme A3 and copper B (CU(B)). The BNC reduces molecular oxygen to 2 water molecules using 4 electrons from cytochrome c in the IMS and 4 protons from the mitochondrial matrix. The polypeptide is Cytochrome c oxidase subunit 3 (COIII) (Artemia salina (Brine shrimp)).